A 213-amino-acid chain; its full sequence is Kynurenine formamidase (213 aa).

A substrate-binding site is contributed by W18. Zn(2+) contacts are provided by H48, H52, and D54. The active-site Proton donor/acceptor is H58. H160 and E172 together coordinate Zn(2+).

The protein belongs to the Cyclase 1 superfamily. KynB family. In terms of assembly, homodimer. Zn(2+) is required as a cofactor.

The enzyme catalyses N-formyl-L-kynurenine + H2O = L-kynurenine + formate + H(+). The protein operates within amino-acid degradation; L-tryptophan degradation via kynurenine pathway; L-kynurenine from L-tryptophan: step 2/2. Its function is as follows. Catalyzes the hydrolysis of N-formyl-L-kynurenine to L-kynurenine, the second step in the kynurenine pathway of tryptophan degradation. The chain is Kynurenine formamidase from Burkholderia mallei (strain NCTC 10247).